The following is a 420-amino-acid chain: Gamma-glutamyl phosphate reductase (420 aa).

This sequence belongs to the gamma-glutamyl phosphate reductase family.

It is found in the cytoplasm. It carries out the reaction L-glutamate 5-semialdehyde + phosphate + NADP(+) = L-glutamyl 5-phosphate + NADPH + H(+). It participates in amino-acid biosynthesis; L-proline biosynthesis; L-glutamate 5-semialdehyde from L-glutamate: step 2/2. Its function is as follows. Catalyzes the NADPH-dependent reduction of L-glutamate 5-phosphate into L-glutamate 5-semialdehyde and phosphate. The product spontaneously undergoes cyclization to form 1-pyrroline-5-carboxylate. The sequence is that of Gamma-glutamyl phosphate reductase from Cereibacter sphaeroides (strain ATCC 17023 / DSM 158 / JCM 6121 / CCUG 31486 / LMG 2827 / NBRC 12203 / NCIMB 8253 / ATH 2.4.1.) (Rhodobacter sphaeroides).